The chain runs to 207 residues: C-type lectin domain family 2 member D11 (207 aa).

Residues 1-44 (MSAKKASQPMLNTTGSLQEGEMGKMFHGKCLRIVSPESPAKLYC) lie on the Cytoplasmic side of the membrane. A phosphoserine mark is found at serine 7 and serine 16. A helical; Signal-anchor for type II membrane protein membrane pass occupies residues 45–65 (CYGVIMVLSVAVVALSVALSV). At 66–207 (KMTPQISTIN…LQCKTPFSPM (142 aa)) the chain is on the extracellular side. Residues 87–198 (VGNKCFYFSE…SCSKLNSYSL (112 aa)) enclose the C-type lectin domain. Asparagine 100 is a glycosylation site (N-linked (GlcNAc...) asparagine).

The protein localises to the cell membrane. In terms of biological role, receptor for KLRB1B that protects target cells against natural killer cell-mediated lysis. In Rattus norvegicus (Rat), this protein is C-type lectin domain family 2 member D11 (Clec2d11).